We begin with the raw amino-acid sequence, 2131 residues long: Protein Ycf2 (2131 aa).

1484-1491 (GSIGTGRS) is an ATP binding site.

Belongs to the Ycf2 family.

Its subcellular location is the plastid. The protein resides in the chloroplast stroma. Functionally, probable ATPase of unknown function. Its presence in a non-photosynthetic plant (Epifagus virginiana) and experiments in tobacco indicate that it has an essential function which is probably not related to photosynthesis. This is Protein Ycf2 (ycf2-A) from Spinacia oleracea (Spinach).